Here is a 228-residue protein sequence, read N- to C-terminus: Translin (228 aa).

The DNA/RNA binding stretch occupies residues 86 to 90 (RFHEH). Residues 177–198 (LDSGFRLLNLKNDSLRKRYDGL) form a leucine-zipper region. An N6-acetyllysine modification is found at Lys-187. Ser-190 bears the Phosphoserine mark. N6-acetyllysine is present on Lys-199.

Belongs to the translin family. As to quaternary structure, ring-shaped heterooctamer of six TSN and two TSNAX subunits, DNA/RNA binding occurs inside the ring.

It localises to the cytoplasm. Its subcellular location is the nucleus. DNA-binding protein that specifically recognizes consensus sequences at the breakpoint junctions in chromosomal translocations, mostly involving immunoglobulin (Ig)/T-cell receptor gene segments. Seems to recognize single-stranded DNA ends generated by staggered breaks occurring at recombination hot spots. Functionally, exhibits both single-stranded and double-stranded endoribonuclease activity. May act as an activator of RNA-induced silencing complex (RISC) by facilitating endonucleolytic cleavage of the siRNA passenger strand. The protein is Translin of Homo sapiens (Human).